The sequence spans 246 residues: Proteasome subunit alpha type-6-A (246 aa).

The protein belongs to the peptidase T1A family. As to quaternary structure, component of the 20S core complex of the 26S proteasome. The 26S proteasome is composed of a core protease (CP), known as the 20S proteasome, capped at one or both ends by the 19S regulatory particle (RP/PA700). The 20S proteasome core is composed of 28 subunits that are arranged in four stacked rings, resulting in a barrel-shaped structure. The two end rings are each formed by seven alpha subunits, and the two central rings are each formed by seven beta subunits. The catalytic chamber with the active sites is on the inside of the barrel. In terms of tissue distribution, ubiquitous low levels, higher expression in siliques and flowers.

The protein resides in the cytoplasm. The protein localises to the nucleus. Its function is as follows. The proteasome is a multicatalytic proteinase complex which is characterized by its ability to cleave peptides with Arg, Phe, Tyr, Leu, and Glu adjacent to the leaving group at neutral or slightly basic pH. The proteasome has an ATP-dependent proteolytic activity. The sequence is that of Proteasome subunit alpha type-6-A (PAA1) from Arabidopsis thaliana (Mouse-ear cress).